We begin with the raw amino-acid sequence, 91 residues long: MATSAAAKDDDSPATRFAVDQLKSIIERIERLEEEKKAISEDIKDVYAESKGNGFDVKALRTIIRLRKQDPNERQEEESILETYMQALGMI.

The protein belongs to the UPF0335 family.

The protein is UPF0335 protein BRADO1188 of Bradyrhizobium sp. (strain ORS 278).